The following is a 685-amino-acid chain: Methionine--tRNA ligase (685 aa).

Positions proline 12 to histidine 22 match the 'HIGH' region motif. 4 residues coordinate Zn(2+): cysteine 143, cysteine 146, cysteine 156, and cysteine 159. A 'KMSKS' region motif is present at residues lysine 339–serine 343. Lysine 342 lines the ATP pocket. In terms of domain architecture, tRNA-binding spans aspartate 582 to glycine 685.

It belongs to the class-I aminoacyl-tRNA synthetase family. MetG type 1 subfamily. As to quaternary structure, homodimer. Zn(2+) is required as a cofactor.

It is found in the cytoplasm. The catalysed reaction is tRNA(Met) + L-methionine + ATP = L-methionyl-tRNA(Met) + AMP + diphosphate. In terms of biological role, is required not only for elongation of protein synthesis but also for the initiation of all mRNA translation through initiator tRNA(fMet) aminoacylation. The polypeptide is Methionine--tRNA ligase (Neisseria meningitidis serogroup C (strain 053442)).